We begin with the raw amino-acid sequence, 160 residues long: Small ribosomal subunit protein uS7 (160 aa).

This sequence belongs to the universal ribosomal protein uS7 family. As to quaternary structure, part of the 30S ribosomal subunit. Contacts proteins S9 and S11.

Functionally, one of the primary rRNA binding proteins, it binds directly to 16S rRNA where it nucleates assembly of the head domain of the 30S subunit. Is located at the subunit interface close to the decoding center, probably blocks exit of the E-site tRNA. The protein is Small ribosomal subunit protein uS7 of Rickettsia rickettsii (strain Iowa).